The following is a 211-amino-acid chain: Phosphoribosyl-dephospho-CoA transferase (211 aa).

Catalysis depends on residues D136 and D138.

The protein belongs to the MdcG family.

It catalyses the reaction apo-[malonate decarboxylase ACP] + 2'-(5''-triphospho-alpha-D-ribosyl)-3'-dephospho-CoA = holo-[malonate decarboxylase ACP] + diphosphate. Functionally, transfers 2'-(5-triphosphoribosyl)-3'-dephosphocoenzyme-A to the apo-[acyl-carrier-protein] of the malonate decarboxylase to yield holo-[acyl-carrier-protein]. This chain is Phosphoribosyl-dephospho-CoA transferase, found in Pseudomonas syringae pv. tomato (strain ATCC BAA-871 / DC3000).